The primary structure comprises 498 residues: ATP synthase subunit beta, chloroplastic (498 aa).

172 to 179 is an ATP binding site; sequence GGAGVGKT.

This sequence belongs to the ATPase alpha/beta chains family. F-type ATPases have 2 components, CF(1) - the catalytic core - and CF(0) - the membrane proton channel. CF(1) has five subunits: alpha(3), beta(3), gamma(1), delta(1), epsilon(1). CF(0) has four main subunits: a(1), b(1), b'(1) and c(9-12).

The protein localises to the plastid. It localises to the chloroplast thylakoid membrane. It catalyses the reaction ATP + H2O + 4 H(+)(in) = ADP + phosphate + 5 H(+)(out). Produces ATP from ADP in the presence of a proton gradient across the membrane. The catalytic sites are hosted primarily by the beta subunits. This Oryza nivara (Indian wild rice) protein is ATP synthase subunit beta, chloroplastic.